A 161-amino-acid chain; its full sequence is uncharacterized protein (161 aa).

The chain crosses the membrane as a helical span at residues 5–25; it reads GPTLLSLLAALLVSLGLLLWY.

Belongs to the IIV-6 203L/325L family.

It localises to the membrane. This is an uncharacterized protein from Invertebrate iridescent virus 3 (IIV-3).